Consider the following 311-residue polypeptide: Probable protein phosphatase 2C 59 (311 aa).

The span at 1 to 14 shows a compositional bias: low complexity; it reads MGYLNSVLSSSSQV. Residues 1–26 form a disordered region; it reads MGYLNSVLSSSSQVHSDDGPVSGGGL. The region spanning 33–279 is the PPM-type phosphatase domain; the sequence is SYGYASSPGK…DNITCVVVRF (247 aa). Mn(2+) contacts are provided by aspartate 69, glycine 70, aspartate 231, and aspartate 270.

The protein belongs to the PP2C family. Interacts with the Pseudomonas syringae pv. maculicola effector HopW1-1 (via C-terminus). It depends on Mg(2+) as a cofactor. Mn(2+) is required as a cofactor.

The catalysed reaction is O-phospho-L-seryl-[protein] + H2O = L-seryl-[protein] + phosphate. The enzyme catalyses O-phospho-L-threonyl-[protein] + H2O = L-threonyl-[protein] + phosphate. Its activity is regulated as follows. Inhibited by sodium fluoride (NaF). Functionally, protein phosphatase that modulates defense response to pathogenic bacteria, conferring resistance and promoting salicylic acid (SA) accumulation. The protein is Probable protein phosphatase 2C 59 (WIN2) of Arabidopsis thaliana (Mouse-ear cress).